Consider the following 736-residue polypeptide: Catalase-peroxidase 2 (736 aa).

Residues 91–227 (WHSAGTYRMG…LAAVQMGLIY (137 aa)) constitute a cross-link (tryptophyl-tyrosyl-methioninium (Trp-Tyr) (with M-253)). The Proton acceptor role is filled by His92. The segment at residues 227–253 (YVNPEGPDGNPDPVAAAYDIREVFGRM) is a cross-link (tryptophyl-tyrosyl-methioninium (Tyr-Met) (with W-91)). His268 is a heme b binding site.

Belongs to the peroxidase family. Peroxidase/catalase subfamily. As to quaternary structure, homodimer or homotetramer. Heme b is required as a cofactor. Post-translationally, formation of the three residue Trp-Tyr-Met cross-link is important for the catalase, but not the peroxidase activity of the enzyme.

The catalysed reaction is H2O2 + AH2 = A + 2 H2O. It catalyses the reaction 2 H2O2 = O2 + 2 H2O. Functionally, bifunctional enzyme with both catalase and broad-spectrum peroxidase activity. Shows peroxidase specificity towards odianisidine, ABTS and pyrogallol, but methoxyphenol and 2-chloronaphthol are not peroxidized. The polypeptide is Catalase-peroxidase 2 (Burkholderia cenocepacia (strain ATCC BAA-245 / DSM 16553 / LMG 16656 / NCTC 13227 / J2315 / CF5610) (Burkholderia cepacia (strain J2315))).